We begin with the raw amino-acid sequence, 405 residues long: Bifunctional enzyme IspD/IspF (405 aa).

Residues 1–240 (MTLADKPVLS…KLLLDEPKYR (240 aa)) are 2-C-methyl-D-erythritol 4-phosphate cytidylyltransferase. The interval 240–405 (RVGTGYDIHR…LLYKIAPLHN (166 aa)) is 2-C-methyl-D-erythritol 2,4-cyclodiphosphate synthase. Residues aspartate 246 and histidine 248 each coordinate a divalent metal cation. 4-CDP-2-C-methyl-D-erythritol 2-phosphate-binding positions include 246–248 (DIH) and 277–278 (HS). Histidine 285 is an a divalent metal cation binding site. Residues 299–301 (DIG), 375–378 (TTTE), and arginine 385 each bind 4-CDP-2-C-methyl-D-erythritol 2-phosphate.

In the N-terminal section; belongs to the IspD/TarI cytidylyltransferase family. IspD subfamily. This sequence in the C-terminal section; belongs to the IspF family. The cofactor is a divalent metal cation.

The catalysed reaction is 2-C-methyl-D-erythritol 4-phosphate + CTP + H(+) = 4-CDP-2-C-methyl-D-erythritol + diphosphate. The enzyme catalyses 4-CDP-2-C-methyl-D-erythritol 2-phosphate = 2-C-methyl-D-erythritol 2,4-cyclic diphosphate + CMP. It participates in isoprenoid biosynthesis; isopentenyl diphosphate biosynthesis via DXP pathway; isopentenyl diphosphate from 1-deoxy-D-xylulose 5-phosphate: step 2/6. Its pathway is isoprenoid biosynthesis; isopentenyl diphosphate biosynthesis via DXP pathway; isopentenyl diphosphate from 1-deoxy-D-xylulose 5-phosphate: step 4/6. Bifunctional enzyme that catalyzes the formation of 4-diphosphocytidyl-2-C-methyl-D-erythritol from CTP and 2-C-methyl-D-erythritol 4-phosphate (MEP) (IspD), and catalyzes the conversion of 4-diphosphocytidyl-2-C-methyl-D-erythritol 2-phosphate (CDP-ME2P) to 2-C-methyl-D-erythritol 2,4-cyclodiphosphate (ME-CPP) with a corresponding release of cytidine 5-monophosphate (CMP) (IspF). The protein is Bifunctional enzyme IspD/IspF of Wolbachia sp. subsp. Brugia malayi (strain TRS).